The sequence spans 228 residues: 5'-methylthioadenosine/S-adenosylhomocysteine nucleosidase (228 aa).

Glu11 functions as the Proton acceptor in the catalytic mechanism. Substrate is bound by residues Gly77, Ile151, and Met172 to Glu173. The active-site Proton donor is Asp196.

The protein belongs to the PNP/UDP phosphorylase family. MtnN subfamily.

It catalyses the reaction S-adenosyl-L-homocysteine + H2O = S-(5-deoxy-D-ribos-5-yl)-L-homocysteine + adenine. It carries out the reaction S-methyl-5'-thioadenosine + H2O = 5-(methylsulfanyl)-D-ribose + adenine. The enzyme catalyses 5'-deoxyadenosine + H2O = 5-deoxy-D-ribose + adenine. The protein operates within amino-acid biosynthesis; L-methionine biosynthesis via salvage pathway; S-methyl-5-thio-alpha-D-ribose 1-phosphate from S-methyl-5'-thioadenosine (hydrolase route): step 1/2. In terms of biological role, catalyzes the irreversible cleavage of the glycosidic bond in both 5'-methylthioadenosine (MTA) and S-adenosylhomocysteine (SAH/AdoHcy) to adenine and the corresponding thioribose, 5'-methylthioribose and S-ribosylhomocysteine, respectively. Also cleaves 5'-deoxyadenosine, a toxic by-product of radical S-adenosylmethionine (SAM) enzymes, into 5-deoxyribose and adenine. This is 5'-methylthioadenosine/S-adenosylhomocysteine nucleosidase from Staphylococcus aureus (strain JH1).